A 142-amino-acid chain; its full sequence is Pre-mRNA-splicing factor cwf18 (142 aa).

A compositionally biased stretch (basic and acidic residues) spans 24–45; it reads LENKTRDSQEVQKNVIEHRNYD. Positions 24-54 are disordered; that stretch reads LENKTRDSQEVQKNVIEHRNYDPEVQAPKMG.

Belongs to the 40S cdc5-associated complex (or cwf complex), a spliceosome sub-complex reminiscent of a late-stage spliceosome composed of the U2, U5 and U6 snRNAs and at least brr2, cdc5, cwf2/prp3, cwf3/syf1, cwf4/syf3, cwf5/ecm2, spp42/cwf6, cwf7/spf27, cwf8, cwf9, cwf10, cwf11, cwf12, prp45/cwf13, cwf14, cwf15, cwf16, cwf17, cwf18, cwf19, cwf20, cwf21, cwf22, cwf23, cwf24, cwf25, cwf26, cyp7/cwf27, cwf28, cwf29/ist3, lea1, msl1, prp5/cwf1, prp10, prp12/sap130, prp17, prp22, sap61, sap62, sap114, sap145, slu7, smb1, smd1, smd3, smf1, smg1 and syf2.

The protein resides in the nucleus. In terms of biological role, involved in mRNA splicing where it associates with cdc5 and the other cwf proteins as part of the spliceosome. The protein is Pre-mRNA-splicing factor cwf18 (cwf18) of Schizosaccharomyces pombe (strain 972 / ATCC 24843) (Fission yeast).